Here is a 215-residue protein sequence, read N- to C-terminus: Nascent polypeptide-associated complex subunit alpha (215 aa).

The interval 1–81 (MPGEATDTVP…SEKKARKAMS (81 aa)) is disordered. Residues 9–28 (VPATEQELPQPQAETGSGTE) are compositionally biased toward polar residues. The span at 29-42 (SDSDESVPELEEQD) shows a compositional bias: acidic residues. Ser-43 bears the Phosphoserine; by ILK1 mark. Positions 44-57 (TQATTQQAQLAAAA) are enriched in low complexity. Positions 69–80 (QSRSEKKARKAM) are required for DNA-binding. Positions 70-135 (SRSEKKARKA…AKIEDLSQQA (66 aa)) constitute an NAC-A/B domain. Residues 93–108 (RVTIRKSKNILFVITK) are RNA/DNA-binding. Position 132 is a phosphoserine (Ser-132). The residue at position 142 (Lys-142) is an N6-acetyllysine; alternate. Lys-142 is covalently cross-linked (Glycyl lysine isopeptide (Lys-Gly) (interchain with G-Cter in SUMO2); alternate). Thr-159 is subject to Phosphothreonine; by GSK3-beta. The residue at position 161 (Thr-161) is a Phosphothreonine. Phosphoserine is present on residues Ser-166, Ser-186, Ser-191, and Ser-203. One can recognise a UBA domain in the interval 176 to 213 (VEVKDIELVMSQANVSRAKAVRALKNNSNDIVNAIMEL).

The protein belongs to the NAC-alpha family. Part of the nascent polypeptide-associated complex (NAC), which is a heterodimer of NACA and BTF3 (via NAC-A/B domains). NAC associates with ribosomes through the BTF3/NACB subunit and contacts the ribosomal protein L23, which is positioned near the exiting site. Both subunits can contact nascent polypeptide chains. NACA may also form homodimers, and only this form binds DNA. Interacts with TBP and JUN. In terms of processing, phosphorylation of Ser-43 by ILK during cell adhesion may promote nuclear localization. Phosphorylation of Thr-159 by GSK3B may promote proteasome mediated degradation.

Its subcellular location is the cytoplasm. The protein localises to the nucleus. Prevents inappropriate targeting of non-secretory polypeptides to the endoplasmic reticulum (ER). Binds to nascent polypeptide chains as they emerge from the ribosome and blocks their interaction with the signal recognition particle (SRP), which normally targets nascent secretory peptides to the ER. Also reduces the inherent affinity of ribosomes for protein translocation sites in the ER membrane (M sites). May act as a specific coactivator for JUN, binding to DNA and stabilizing the interaction of JUN homodimers with target gene promoters. This chain is Nascent polypeptide-associated complex subunit alpha (NACA), found in Bos taurus (Bovine).